The chain runs to 179 residues: Cell division protein SepF (179 aa).

The interval 18–55 is disordered; the sequence is EDSSLPYEKRDEPVFTPVNSSQEPALPMNQPSQSAGTK. Polar residues predominate over residues 34-55; the sequence is PVNSSQEPALPMNQPSQSAGTK.

It belongs to the SepF family. As to quaternary structure, homodimer. Interacts with FtsZ.

The protein resides in the cytoplasm. Its function is as follows. Cell division protein that is part of the divisome complex and is recruited early to the Z-ring. Probably stimulates Z-ring formation, perhaps through the cross-linking of FtsZ protofilaments. Its function overlaps with FtsA. This is Cell division protein SepF from Streptococcus pneumoniae (strain ATCC 700669 / Spain 23F-1).